A 109-amino-acid polypeptide reads, in one-letter code: Spermidine export protein MdtI (109 aa).

4 consecutive transmembrane segments (helical) span residues 6–26 (WIHGAWLGLAIMLEIAANVLL), 36–56 (CYGILSLAAVLAAFSALSQAV), 64–84 (AYALWGGFGIAATLAAGWVLF), and 88–108 (LNPKGWVGVILLLAGMVMIKF).

Belongs to the drug/metabolite transporter (DMT) superfamily. Small multidrug resistance (SMR) (TC 2.A.7.1) family. MdtI subfamily. In terms of assembly, forms a complex with MdtJ.

The protein resides in the cell inner membrane. In terms of biological role, catalyzes the excretion of spermidine. This is Spermidine export protein MdtI from Salmonella choleraesuis (strain SC-B67).